An 89-amino-acid polypeptide reads, in one-letter code: Small ribosomal subunit protein uS15 (89 aa).

It belongs to the universal ribosomal protein uS15 family. Part of the 30S ribosomal subunit. Forms a bridge to the 50S subunit in the 70S ribosome, contacting the 23S rRNA.

One of the primary rRNA binding proteins, it binds directly to 16S rRNA where it helps nucleate assembly of the platform of the 30S subunit by binding and bridging several RNA helices of the 16S rRNA. Its function is as follows. Forms an intersubunit bridge (bridge B4) with the 23S rRNA of the 50S subunit in the ribosome. This chain is Small ribosomal subunit protein uS15, found in Cupriavidus pinatubonensis (strain JMP 134 / LMG 1197) (Cupriavidus necator (strain JMP 134)).